The primary structure comprises 117 residues: Immunoglobulin kappa variable 1-27 (117 aa).

The first 22 residues, 1–22 (MDMRVPAQLLGLLLLWLPDTRC), serve as a signal peptide directing secretion. Positions 23–45 (DIQMTQSPSSLSASVGDRVTITC) are framework-1. An Ig-like domain is found at 23–117 (DIQMTQSPSS…YYCQKYNSAP (95 aa)). A disulfide bridge connects residues cysteine 45 and cysteine 110. A complementarity-determining-1 region spans residues 46–56 (RASQGISNYLA). The segment at 57 to 71 (WYQQKPGKVPKLLIY) is framework-2. Residues 72–78 (AASTLQS) are complementarity-determining-2. The interval 79–110 (GVPSRFSGSGSGTDFTLTISSLQPEDVATYYC) is framework-3. The complementarity-determining-3 stretch occupies residues 111-117 (QKYNSAP).

Immunoglobulins are composed of two identical heavy chains and two identical light chains; disulfide-linked.

It localises to the secreted. Its subcellular location is the cell membrane. Functionally, v region of the variable domain of immunoglobulin light chains that participates in the antigen recognition. Immunoglobulins, also known as antibodies, are membrane-bound or secreted glycoproteins produced by B lymphocytes. In the recognition phase of humoral immunity, the membrane-bound immunoglobulins serve as receptors which, upon binding of a specific antigen, trigger the clonal expansion and differentiation of B lymphocytes into immunoglobulins-secreting plasma cells. Secreted immunoglobulins mediate the effector phase of humoral immunity, which results in the elimination of bound antigens. The antigen binding site is formed by the variable domain of one heavy chain, together with that of its associated light chain. Thus, each immunoglobulin has two antigen binding sites with remarkable affinity for a particular antigen. The variable domains are assembled by a process called V-(D)-J rearrangement and can then be subjected to somatic hypermutations which, after exposure to antigen and selection, allow affinity maturation for a particular antigen. The sequence is that of Immunoglobulin kappa variable 1-27 from Homo sapiens (Human).